A 609-amino-acid chain; its full sequence is Elongation factor 4 (609 aa).

The region spanning 5-187 (SKIRNFSIIA…AIVAKIPPPE (183 aa)) is the tr-type G domain. GTP contacts are provided by residues 17-22 (DHGKST) and 134-137 (NKID).

The protein belongs to the TRAFAC class translation factor GTPase superfamily. Classic translation factor GTPase family. LepA subfamily.

The protein resides in the cell inner membrane. The catalysed reaction is GTP + H2O = GDP + phosphate + H(+). Functionally, required for accurate and efficient protein synthesis under certain stress conditions. May act as a fidelity factor of the translation reaction, by catalyzing a one-codon backward translocation of tRNAs on improperly translocated ribosomes. Back-translocation proceeds from a post-translocation (POST) complex to a pre-translocation (PRE) complex, thus giving elongation factor G a second chance to translocate the tRNAs correctly. Binds to ribosomes in a GTP-dependent manner. In Erythrobacter litoralis (strain HTCC2594), this protein is Elongation factor 4.